Reading from the N-terminus, the 275-residue chain is Arylamine N-acetyltransferase (275 aa).

The active-site Acyl-thioester intermediate is Cys70. Catalysis depends on residues His110 and Asp127.

The protein belongs to the arylamine N-acetyltransferase family. Homodimer and homotetramer.

The enzyme catalyses an arylamine + acetyl-CoA = an N-acetylarylamine + CoA. Functionally, catalyzes the transfer of the acetyl group from acetyl coenzyme A to the free amino group of arylamines and hydrazines. Substrates include isoniazid, anisidine, and 4-aminoveratrole, and to a much lesser extent, p-aminobenzoic acid. The chain is Arylamine N-acetyltransferase from Mycolicibacterium smegmatis (Mycobacterium smegmatis).